A 77-amino-acid chain; its full sequence is U11-lycotoxin-Ls1a (77 aa).

Residues 1–20 (MKLIILTGLVLFAIVSLIEA) form the signal peptide. A propeptide spanning residues 21-26 (EEESGR) is cleaved from the precursor.

It belongs to the neurotoxin 19 (CSTX) family. 10 (U11-Lctx) subfamily. In terms of processing, contains 4 disulfide bonds. As to expression, expressed by the venom gland.

The protein localises to the secreted. The sequence is that of U11-lycotoxin-Ls1a from Lycosa singoriensis (Wolf spider).